The sequence spans 86 residues: Large ribosomal subunit protein bL31B (86 aa).

This sequence belongs to the bacterial ribosomal protein bL31 family. Type B subfamily. As to quaternary structure, part of the 50S ribosomal subunit.

The polypeptide is Large ribosomal subunit protein bL31B (Yersinia enterocolitica serotype O:8 / biotype 1B (strain NCTC 13174 / 8081)).